The sequence spans 927 residues: MSAKLLYNLSDENPNLNKQIGCMNGIFQVFYRQHYPPRRVTGDELKSLPSGKASDNVGDTNISADKKETEKSKKKKTAKEKQRGVSSESSSRLSFSSSPCSSSFSSADISTTASQFEQPGLSNGENPVREPTNGSPRWGGLMMPSDIRELVRSSIHKETRTRDEEALSQQPKSARANVSLLKESSPSRNSNEWSEGRRVVKLKDSPRFSYDERETRKTGAKLKETPRLSLDSRSNSFRSARSSCSPEPQELVTGHRRTTSSVVAKLMGLEVIPDEPVTIQNRENRFCDSPRPTSRVEVDLQRSRGFDSIKKMMPAKFPMKASPWAQVDGAKNQVKIPDATTLTVYGEIQKRLSQLEFKKSEKDLRALKQILEAMEKTQQLISKDDDDNKTLCSSNFMQRNNQPIPSAINTSSMNFKSSSIVVMKAATAPVFKDTGIAGSASFSPRNVALPNVKVGNLRQAQKVIPRKQSAMDVTPRPGYYKGQTESTMKNTSTRPLQSKSDMAKSGKIQKPSVSLRTPPKKLGFEKQSRPTSPKPELNKNQRQQLSRQQTESASPRRKPGIKSRGLQQSEDRLSDESSDLRSLRSDSNVSLASNLDTEVTSRYNYERNSDITEQHTPKQRSPDLGMRSLSKPLKVTVEQPSPVSVLDVAFDEDDSPSPVRKISIVFKEDDNLSSEESHWMNKNNNLCRSIVWPESNTSLKQPDAELTEGFMEDDAEFKNGDHKYISEIMLASGLLRDIDYSMISIQLHQAHLPINPSLFFVLEQNKTSNVSLQDNKHKGRGFGQQQTVNLVERSKRKLIFDTINEILAHRFAAEGCTKQPSITLSISTQRTHEKSSRGEELLQTLCSEIDRLQDNSKCILDEDDEDLIWEDLQSHGMNWKEIEGETPGLVLDIERLIFKDLIGEVVTSEFAAFPRMLSGQPRQLFHC.

Disordered stretches follow at residues 41 to 198, 210 to 257, 460 to 588, and 605 to 626; these read TGDE…EGRR, YDER…GHRR, AQKV…SDSN, and YERN…DLGM. Positions 86-114 are enriched in low complexity; that stretch reads SSESSSRLSFSSSPCSSSFSSADISTTAS. Over residues 115 to 125 the composition is skewed to polar residues; the sequence is QFEQPGLSNGE. Residues 146–165 show a composition bias toward basic and acidic residues; sequence DIRELVRSSIHKETRTRDEE. Polar residues predominate over residues 182–193; that stretch reads KESSPSRNSNEW. The segment covering 210 to 226 has biased composition (basic and acidic residues); that stretch reads YDERETRKTGAKLKETP. Low complexity predominate over residues 232-245; that stretch reads SRSNSFRSARSSCS. Composition is skewed to polar residues over residues 483–500 and 538–553; these read QTES…QSKS and NKNQ…TESA. Basic and acidic residues-rich tracts occupy residues 569–584 and 605–616; these read SEDR…RSLR and YERNSDITEQHT.

Interacts (via C-terminus) with TON1A and TON1B. Expressed in roots, petioles, leaf blades and floral organs.

The protein resides in the nucleus. Functionally, in association with LNG2, regulates leaf morphology by promoting longitudinal polar cell elongation independently of ROT3. The chain is Protein LONGIFOLIA 1 (LNG1) from Arabidopsis thaliana (Mouse-ear cress).